Consider the following 711-residue polypeptide: Ubiquitin carboxyl-terminal hydrolase BAP1 (711 aa).

Residues 4-234 (GWLELESDPG…ARLHVLKVNR (231 aa)) enclose the UCH catalytic domain. The Arg-finger motif motif lies at 56–60 (RRSRR). Cys91 acts as the Nucleophile in catalysis. His169 (proton donor) is an active-site residue. Positions 255-337 (THKSQESQLP…VPPNPTPIVQ (83 aa)) are disordered. Positions 269–278 (PASSKSPLAL) are enriched in low complexity. A Phosphoserine modification is found at Ser274. The HBM-like motif signature appears at 345–348 (NHNY). 2 positions are modified to phosphoserine: Ser351 and Ser377. Disordered stretches follow at residues 354–420 (QEEE…GQLS) and 446–506 (SIKT…SPVT). Over residues 377 to 391 (SDDEDDYEDEEEDDA) the composition is skewed to acidic residues. A compositionally biased stretch (polar residues) spans 462–506 (THSQPSPTPSNESTDTASEIGSAFNSPLRSPIRSANPTRPSSPVT). Thr475 is modified (phosphothreonine). Ser503, Ser519, Ser567, and Ser579 each carry phosphoserine. Positions 557–605 (LTESGKGSSPSIRPSQGSQGSGSPEEKEVVEAVDSREKPGLVRPSESLN) are disordered. Residues 563–579 (GSSPSIRPSQGSQGSGS) are compositionally biased toward low complexity. The segment at 578 to 703 (GSPEEKEVVE…QRKPDRRKRS (126 aa)) is interaction with BRCA1. Residues 580–596 (PEEKEVVEAVDSREKPG) show a composition bias toward basic and acidic residues. Residues 612–643 (KELLALLKCVEAEIANYEACLKEEVEKRKKFK) are a coiled coil. The interval 624-668 (EIANYEACLKEEVEKRKKFKIDDQRRTHNYDEFICTFISMLAQEG) is interaction with YY1. The region spanning 652–680 (NYDEFICTFISMLAQEGMLANLVEQNISV) is the ULD domain. Positions 681–683 (RRR) are interaction with nucleosomal DNA forming a DNA clamp with ASXL1. Positions 681–704 (RRRQGVSIGRLHKQRKPDRRKRSR) match the Classical bipartite Nuclear localization signal (NLS) motif. Residues 685 to 711 (GVSIGRLHKQRKPDRRKRSRPYKAKRQ) are disordered. A positively charged C-terminal extension (CTE) region spans residues 695-711 (RKPDRRKRSRPYKAKRQ). Positions 699–704 (RRKRSR) match the Nuclear localization signal motif. Positions 699 to 706 (RRKRSRPY) match the Non-classical PY-nuclear localization signal (PY-NLS) motif.

Belongs to the peptidase C12 family. BAP1 subfamily. As to quaternary structure, core component of the polycomb repressive deubiquitinase (PR-DUB) complex, at least composed of BAP1, one of ASXL1, ASXL2 or (probably) ASXL3, and one of MBD5 or MBD6. The PR-DUB core associates with a number of accessory proteins, including FOXK1, FOXK2, KDM1B, HCFC1, YY1 and OGT; KDM1B specifically associates with ASXL2 PR-DUB complexes. The BAP1 deubiquitinase activity is not required for PR-DUB assembly. Homodimerizes (via coiled-coil hinge-region between the UCH and ULD domains) to mediate assembly of 2 copies of the BAP1-ASXL heterodimer into a bisymmetric tetramer; dimerization enhances association with nucleosomes. The PR-DUB complex associates with nucleosomes to mediate deubiquitination of 'lys-120' of histone H2AK118ub1 substrates; the association requires the positively charged C-terminal tail of BAP1. Interacts (via ULD domain) with ASXL1 (via DEUBAD domain); the interaction is direct and forms a ubiquitin binding cleft. The interaction with ASXL1 stabilizes BAP1 but is not required for nucleosome binding. Associates (via C-terminus) with nucleosome and chromatosome complexes through direct interaction with DNA and the histone3/4 dimer; this association displaces the histone-2A C-terminal tail, extending and orienting the H2AK118ub1 substrate towards the BAP1 deubiquitinase active site. Also interacts (via arginine finger) directly with the histone H2A-H2B acidic patch; this interaction is not critical for nucleosome-chromatosome association but may play a role in orienting the H2AK118ub1 substrate towards the PR-DUB complex active site. Interacts with BRCA1 (via the RING finger). Interacts (via HBM-like motif) with HCFC1. Interacts (via a C-terminal region overlapping the ULD domain) with YY1; the interaction is direct and requires the interaction with HCFC1. Interacts (when phosphorylated at Thr-475) with FOXK1. Interacts (when phosphorylated at Thr-475) with FOXK2; leading to recruitment of the PR-DUB complex and repression of FOXK2 target genes. Interacts (via non-classical PY-NLS) with TNPO1/transportin-1 (via HEAT repeats 8-12); the interaction is direct, mediates BAP1 nuclear localization and disrupts BAP1 homodimerization. Interacts (via C-terminus) with KPNA1/importin alpha5 and KPNA2/importin alpha1; these interactions can contribute to BAP1 nuclear localization but are less important than the interaction with TNPO1/transportin-1. The interaction with TNPO1/transportin-1 disrupts homodimerization and blocks ubiquitination by UBE2O. Ubiquitinated: monoubiquitinated at multiple sites within its nuclear localization signal (NLS) BY UBE2O, leading to cytoplasmic retention. Able to mediate autodeubiquitination via intramolecular interactions to counteract cytoplasmic retention. Monoubiquitinated on at least 4 sites near or within its PY-NLS.

The protein resides in the cytoplasm. The protein localises to the nucleus. It is found in the chromosome. The enzyme catalyses Thiol-dependent hydrolysis of ester, thioester, amide, peptide and isopeptide bonds formed by the C-terminal Gly of ubiquitin (a 76-residue protein attached to proteins as an intracellular targeting signal).. Its function is as follows. Deubiquitinating enzyme that plays a key role in chromatin by mediating deubiquitination of histone H2A and HCFC1. Catalytic component of the polycomb repressive deubiquitinase (PR-DUB) complex, a complex that specifically mediates deubiquitination of histone H2A monoubiquitinated at 'Lys-120' (H2AK119ub1). Does not deubiquitinate monoubiquitinated histone H2B. The PR-DUB complex is an epigenetic regulator of gene expression and acts as a transcriptional coactivator, affecting genes involved in development, cell communication, signaling, cell proliferation and cell viability. Antagonizes PRC1 mediated H2AK119ub1 monoubiquitination. As part of the PR-DUB complex, associates with chromatin enriched in histone marks H3K4me1, H3K4me3, and H3K27Ac, but not in H3K27me3. Acts as a regulator of cell growth by mediating deubiquitination of HCFC1 N-terminal and C-terminal chains, with some specificity toward 'Lys-48'-linked polyubiquitin chains compared to 'Lys-63'-linked polyubiquitin chains. Deubiquitination of HCFC1 does not lead to increase stability of HCFC1. Interferes with the BRCA1 and BARD1 heterodimer activity by inhibiting their ability to mediate ubiquitination and autoubiquitination. It however does not mediate deubiquitination of BRCA1 and BARD1. Able to mediate autodeubiquitination via intramolecular interactions to counteract monoubiquitination at the nuclear localization signal (NLS), thereby protecting it from cytoplasmic sequestration. Negatively regulates epithelial-mesenchymal transition (EMT) of trophoblast stem cells during placental development by regulating genes involved in epithelial cell integrity, cell adhesion and cytoskeletal organization. The protein is Ubiquitin carboxyl-terminal hydrolase BAP1 (BAP1) of Bos taurus (Bovine).